Here is a 266-residue protein sequence, read N- to C-terminus: Serine/arginine-rich splicing factor 12 (266 aa).

Residues 42–266 (ARPRRPRAPR…SRSYHHKNSW (225 aa)) form a disordered region. Over residues 43–62 (RPRRPRAPRPRLRLRGRPGR) the composition is skewed to basic residues. Basic and acidic residues predominate over residues 102–114 (KSKERHLCSPSDH). Positions 115 to 127 (RRSRSPSQRRSRS) are enriched in basic residues. The segment covering 133-144 (GRDRRHSDSLKE) has biased composition (basic and acidic residues). Low complexity predominate over residues 151-166 (SYSQSKSRSKSLPRQS). A compositionally biased stretch (basic residues) spans 183 to 194 (GRSRSKSLPKRS). Polar residues-rich tracts occupy residues 202–212 (SRSPQKQTGSG) and 235–244 (AYTSSGSKTQ). The span at 245-266 (TTKHSHLRSHSRSRSYHHKNSW) shows a compositional bias: basic residues.

This sequence belongs to the splicing factor SR family.

It is found in the nucleus. Its function is as follows. Splicing factor that seems to antagonize SR proteins in pre-mRNA splicing regulation. The sequence is that of Serine/arginine-rich splicing factor 12 (Srsf12) from Mus musculus (Mouse).